The primary structure comprises 530 residues: Lanosterol 14-alpha demethylase CYP51 (530 aa).

At 1-20 the chain is on the lumenal side; that stretch reads MSATKSIVGEALEYVNIGLS. Residues 21 to 41 traverse the membrane as a helical segment; the sequence is HFLALPLAQRISLIIIIPFIY. Residues 42 to 530 are Cytoplasmic-facing; it reads NIVWQLLYSL…WEKRNPEQKI (489 aa). K116 is covalently cross-linked (Glycyl lysine isopeptide (Lys-Gly) (interchain with G-Cter in ubiquitin)). Residue Y126 participates in lanosterol binding. G314 lines the itraconazole pocket. Residues K353 and K454 each participate in a glycyl lysine isopeptide (Lys-Gly) (interchain with G-Cter in ubiquitin) cross-link. S458 is modified (phosphoserine). C470 contacts heme.

It belongs to the cytochrome P450 family. As to quaternary structure, interacts with ERG28. It depends on heme as a cofactor.

It localises to the endoplasmic reticulum membrane. It catalyses the reaction a 14alpha-methyl steroid + 3 reduced [NADPH--hemoprotein reductase] + 3 O2 = a Delta(14) steroid + formate + 3 oxidized [NADPH--hemoprotein reductase] + 4 H2O + 4 H(+). The catalysed reaction is a 14alpha-methyl steroid + reduced [NADPH--hemoprotein reductase] + O2 = a 14alpha-hydroxymethyl steroid + oxidized [NADPH--hemoprotein reductase] + H2O + H(+). The enzyme catalyses a 14alpha-hydroxymethyl steroid + reduced [NADPH--hemoprotein reductase] + O2 = a 14alpha-formyl steroid + oxidized [NADPH--hemoprotein reductase] + 2 H2O + H(+). It carries out the reaction a 14alpha-formyl steroid + reduced [NADPH--hemoprotein reductase] + O2 = a Delta(14) steroid + formate + oxidized [NADPH--hemoprotein reductase] + H2O + 2 H(+). It catalyses the reaction lanosterol + 3 reduced [NADPH--hemoprotein reductase] + 3 O2 = 4,4-dimethyl-5alpha-cholesta-8,14,24-trien-3beta-ol + formate + 3 oxidized [NADPH--hemoprotein reductase] + 4 H2O + 4 H(+). The catalysed reaction is lanosterol + reduced [NADPH--hemoprotein reductase] + O2 = 32-hydroxylanosterol + oxidized [NADPH--hemoprotein reductase] + H2O + H(+). The enzyme catalyses 32-hydroxylanosterol + reduced [NADPH--hemoprotein reductase] + O2 = 32-oxolanosterol + oxidized [NADPH--hemoprotein reductase] + 2 H2O + H(+). It carries out the reaction 32-oxolanosterol + reduced [NADPH--hemoprotein reductase] + O2 = 4,4-dimethyl-5alpha-cholesta-8,14,24-trien-3beta-ol + formate + oxidized [NADPH--hemoprotein reductase] + H2O + 2 H(+). It participates in steroid biosynthesis; zymosterol biosynthesis; zymosterol from lanosterol: step 1/6. Sterol 14alpha-demethylase that plays a critical role in the third module of ergosterol biosynthesis pathway, being ergosterol the major sterol component in fungal membranes that participates in a variety of functions. The third module or late pathway involves the ergosterol synthesis itself through consecutive reactions that mainly occur in the endoplasmic reticulum (ER) membrane. Starting from lanosterol (lanosta-8,24-dien-3beta-ol), it catalyzes the three-step oxidative removal of the 14alpha-methyl group (C-32) of the sterol in the form of formate, and converts the sterol to 4,4-dimethyl-5alpha-cholesta-8,14,24-trien-3beta-ol, which is critical for ergosterol biosynthesis. Can demethylate substrates not intrinsic to yeast, such as eburicol (24-methylene-24,25-dihydrolanosterol) at a similar rate to lanosterol, and at a lower rate the 24,25-dihydrolanosterol (DHL) to 4,4-dimethyl-8,14-cholestadien-3beta-ol. This is Lanosterol 14-alpha demethylase CYP51 from Saccharomyces cerevisiae (strain ATCC 204508 / S288c) (Baker's yeast).